Consider the following 257-residue polypeptide: Receptor expression-enhancing protein 4 (257 aa).

Helical transmembrane passes span 1-21 and 42-62; these read MVSW…CPAY and WIVF…ISWF. 2 positions are modified to phosphoserine: serine 152 and serine 194. The tract at residues 183–257 is disordered; sequence PIGYRAGGLQ…KKTVPSDVDS (75 aa). Threonine 196 bears the Phosphothreonine mark. Serine 202 carries the post-translational modification Phosphoserine. Position 250 is a phosphothreonine (threonine 250). The residue at position 253 (serine 253) is a Phosphoserine.

Belongs to the DP1 family. Expressed in circumvallate papillae and testis.

The protein resides in the endoplasmic reticulum membrane. Functionally, microtubule-binding protein required to ensure proper cell division and nuclear envelope reassembly by sequestering the endoplasmic reticulum away from chromosomes during mitosis. Probably acts by clearing the endoplasmic reticulum membrane from metaphase chromosomes. The chain is Receptor expression-enhancing protein 4 (REEP4) from Homo sapiens (Human).